Consider the following 310-residue polypeptide: Spermatid maturation protein 1 (310 aa).

Residues 29-49 (ILLLLGLIVCINIGINLVTLL) form a helical membrane-spanning segment. Residues 215–238 (ALSHKNNAAGSGGCVEGEQAQGQP) form a disordered region. Residues 262 to 286 (VYDARDVRRRLRELTQEVEALSHCY) are a coiled coil.

As to expression, testis-specific. Exclusively present in cytoplasm of steps 14-16 elongated spermatids (at protein level).

It localises to the membrane. Its subcellular location is the cytoplasm. Its function is as follows. Required for proper cytoplasm removal during spermatogenesis. The chain is Spermatid maturation protein 1 (Spem1) from Mus musculus (Mouse).